Consider the following 277-residue polypeptide: Putative phosphoenolpyruvate synthase regulatory protein (277 aa).

156 to 163 (GVSRAGKT) contacts ADP.

The protein belongs to the pyruvate, phosphate/water dikinase regulatory protein family. PSRP subfamily.

It carries out the reaction [pyruvate, water dikinase] + ADP = [pyruvate, water dikinase]-phosphate + AMP + H(+). The catalysed reaction is [pyruvate, water dikinase]-phosphate + phosphate + H(+) = [pyruvate, water dikinase] + diphosphate. Bifunctional serine/threonine kinase and phosphorylase involved in the regulation of the phosphoenolpyruvate synthase (PEPS) by catalyzing its phosphorylation/dephosphorylation. This Deinococcus radiodurans (strain ATCC 13939 / DSM 20539 / JCM 16871 / CCUG 27074 / LMG 4051 / NBRC 15346 / NCIMB 9279 / VKM B-1422 / R1) protein is Putative phosphoenolpyruvate synthase regulatory protein.